The chain runs to 104 residues: MYAVIRTGGKQYRVAPESILKVEKLEAEAGSTITFTDVLMVGGEGTLTVGAPLVAGATVTATVVAQDRLPKVIIFKKRRRQNSRRKNGHRQPVTVLRINAINAA.

This sequence belongs to the bacterial ribosomal protein bL21 family. As to quaternary structure, part of the 50S ribosomal subunit. Contacts protein L20.

This protein binds to 23S rRNA in the presence of protein L20. The sequence is that of Large ribosomal subunit protein bL21 from Gluconobacter oxydans (strain 621H) (Gluconobacter suboxydans).